The primary structure comprises 89 residues: Small ribosomal subunit protein uS15 (89 aa).

It belongs to the universal ribosomal protein uS15 family. Part of the 30S ribosomal subunit. Forms a bridge to the 50S subunit in the 70S ribosome, contacting the 23S rRNA.

In terms of biological role, one of the primary rRNA binding proteins, it binds directly to 16S rRNA where it helps nucleate assembly of the platform of the 30S subunit by binding and bridging several RNA helices of the 16S rRNA. Functionally, forms an intersubunit bridge (bridge B4) with the 23S rRNA of the 50S subunit in the ribosome. This is Small ribosomal subunit protein uS15 from Orientia tsutsugamushi (strain Ikeda) (Rickettsia tsutsugamushi).